The chain runs to 324 residues: UDP-galactose transporter homolog 1 (324 aa).

A run of 2 helical transmembrane segments spans residues 7–27 and 42–62; these read LVIA…AQEP and HSSF…LCYL. An N-linked (GlcNAc...) asparagine glycan is attached at Asn-97. 7 consecutive transmembrane segments (helical) span residues 106-126, 135-155, 161-181, 199-219, 237-257, 265-285, and 290-310; these read VGYM…HVLV, KALV…GGAE, ASLY…LTNA, HLMV…LVLF, ILTY…FVFF, LVLA…SIVV, and VRPV…WETV.

The protein belongs to the nucleotide-sugar transporter family. SLC35B subfamily.

The protein localises to the endoplasmic reticulum membrane. In terms of biological role, may be involved in specific transport of UDP-Gal from the cytosol to the Golgi lumen. Involved in the maintenance of optimal conditions for the folding of secretory pathway proteins in the endoplasmic reticulum. In Eremothecium gossypii (strain ATCC 10895 / CBS 109.51 / FGSC 9923 / NRRL Y-1056) (Yeast), this protein is UDP-galactose transporter homolog 1 (HUT1).